The following is a 441-amino-acid chain: Synaptotagmin-1 (441 aa).

The Vesicular portion of the chain corresponds to 1 to 69 (MVKLDFSSQD…DVVKEKVMQQ (69 aa)). Residues 70–96 (TGMPEWAFVFLGFVFILLVLACAFCLI) form a helical membrane-spanning segment. Topologically, residues 97–441 (RKLFGKKRHG…EEGDKKDDKK (345 aa)) are cytoplasmic. 2 C2 domains span residues 159–278 (KLGR…EEWK) and 292–425 (SLGD…AQWH). Asp190, Asp196, Asp248, Phe249, Asp250, Ser253, Lys254, Asp256, Asp323, Asp329, Asp383, Asp385, and Asp391 together coordinate Ca(2+).

It belongs to the synaptotagmin family. Ca(2+) is required as a cofactor. In terms of tissue distribution, localized to regions known to be rich in synapses and appears to be associated with synaptic vesicles. Also found in some non-neuronal secretory structures.

Its subcellular location is the cytoplasmic vesicle. It is found in the secretory vesicle. It localises to the synaptic vesicle membrane. The protein localises to the synapse. Functionally, may have a regulatory role in the membrane interactions during trafficking of synaptic vesicles at the active zone of the synapse. It binds acidic phospholipids with a specificity that requires the presence of both an acidic head group and a diacyl backbone. Involved in necrotic cell death. The sequence is that of Synaptotagmin-1 (snt-1) from Caenorhabditis elegans.